The sequence spans 203 residues: Short chain dehydrogenase/reductase dpmpH (203 aa).

NADP(+) contacts are provided by D23, Y77, and K81. The active-site Proton acceptor is Y77. The active-site Lowers pKa of active site Tyr is the K81.

It belongs to the short-chain dehydrogenases/reductases (SDR) family.

It functions in the pathway secondary metabolite biosynthesis; terpenoid biosynthesis. Its function is as follows. Short chain dehydrogenase/reductase; part of the gene cluster that mediates the biosynthesis of diterpenoid pyrones. The first step of the pathway is the synthesis of the alpha-pyrone moiety by the polyketide synthase dpmpA via condensation of one acetyl-CoA starter unit with 3 malonyl-CoA units and 2 methylations. The alpha-pyrone is then combined with geranylgeranyl pyrophosphate (GGPP) formed by the GGPP synthase dpmpD through the action of the prenyltransferase dpmpC to yield a linear alpha-pyrone diterpenoid. Subsequent steps in the diterpenoid pyrone biosynthetic pathway involve the decalin core formation, which is initiated by the epoxidation of the C10-C11 olefin by the FAD-dependent oxidoreductase dpmpE, and is followed by a cyclization cascade catalyzed by the terpene cyclase dpmpB. The short chain dehydrogenase/reductase dpmpG then oxidizes the 8S hydroxy group to a ketone and the short chain dehydrogenase/reductase dpmpH reduces the ketone to the 8R hydroxy group to yield higginsianin B. Higginsianin B is further methylated by the methyltransferase dpmpI to produce the intermediate named FDDP B. The cytochrome P450 monooxygenase dpmpJ then oxidizes the C-26 methyl to primary alcohol, producing the final diterpenoid pyrone with a C-26 primary alcohol on the gamma-pyrone moiety named FDDP C. The protein is Short chain dehydrogenase/reductase dpmpH of Macrophomina phaseolina (strain MS6) (Charcoal rot fungus).